The following is a 992-amino-acid chain: MGMRSAARMPKLTRRSRILIMIALGVIVLLLAGPRLIDAYVDWLWFGELGYRSVFTTMLATRIVVCLVAGVVVGGIVFGGLALAYRTRPVFVPDADNDPVARYRAVVLARLRLVGIGIPAAIGLLAGIVAQSYWARIQLFLHGGDFGVRDPQFGRDLGFYAFELPFYRLMLSYMLVSVFLAFVANLVAHYIFGGIRLSGRTGALSRSARVQLVSLVGVLVLLKAVAYWLDRYELLSHTRGGKPFTGAGYTDINAVLPAKLILMAIALICAAAVFSAIALRDLRIPAIGLVLLLLSSLIVGAGWPLIVEQISVKPNAAQKESEYISRSITATRQAYGLTSDVVTYRNYSGDSPATAQQVAADRATTSNIRLLDPTIVSPAFTQFQQGKNFYYFPDQLSIDRYLDRNGNLRDYVVAARELNPDRLIDNQRDWINRHTVYTHGNGFIASPANTVRGIANDPNQNGGYPEFLVNVVGANGTVVSDGPAPLDQPRIYFGPVISNTSADYAIVGRNGDDREYDYETNIDTKRYTYTGSGGVPLGGWLARSVFAAKFAERNFLFSNVIGSNSKILFNRDPAQRVEAVAPWLTTDSAVYPAIVNKRLVWIVDGYTTLDNYPYSELTSLSSATADSNEVAFNRLVPDKKVSYIRNSVKATVDAYDGTVTLYQQDEKDPVLKAWMQVFPGTVKPKSDIAPELAEHLRYPEDLFKVQRMLLAKYHVNDPVTFFSTSDFWDVPLDPNPTASSYQPPYYIVAKNIAKDDNSASYQLISAMNRFKRDYLAAYISASSDPATYGNLTVLTIPGQVNGPKLANNAITTDPAVSQDLGVIGRDNQNRIRWGNLLTLPVAQGGLLYVEPVYASPGASDAASSYPRLIRVAMMYNDKVGYGPTVRDALTGLFGPGAGATATGIAPTEAAVPPSPAANPPPPASGPQPPPVTAAPPVPVGAVTLSPAKVAALQEIQAAIGAARDAQKKGDFAAYGSALQRLDEAITKFNDAG.

Transmembrane regions (helical) follow at residues 17-39 (RILI…LIDA), 59-81 (LATR…FGGL), 113-135 (LVGI…SYWA), 169-191 (LMLS…AHYI), 212-229 (LVSL…AYWL), 255-277 (VLPA…FSAI), and 284-306 (IPAI…WPLI). Positions 906-938 (PTEAAVPPSPAANPPPPASGPQPPPVTAAPPVP) are disordered. Pro residues predominate over residues 912-938 (PPSPAANPPPPASGPQPPPVTAAPPVP).

The protein belongs to the UPF0182 family.

Its subcellular location is the cell membrane. The sequence is that of UPF0182 protein Mb3215c from Mycobacterium bovis (strain ATCC BAA-935 / AF2122/97).